Consider the following 611-residue polypeptide: MSPTDTTPLLYSWDDQSRHQDPDWHKLRNYHGAWYRRISRRRFSQFIFAFGLMTLFVLVYSISSNLHTPTQFTGHKVRGRRGAVASEVPVCSDIGVSMLADGGNAVDAAIASTFCIGVVNFFSSGIGGGGFMLIKHPNETAQSLTFREIAPGNVSKHMFDKNPMLAQVGPLSIAIPGELAGLYEAWKSHGLLDWSKLLEPNVKLAREGFPVTRAMERVLKLPEMAHLLKDPIWQPILMPNGKVLRAGDKMFRPAYAKTLEIIANKGIEPFYRGELTNSMVKFIQDNGGIVTVEDFGNYSTVFADALHTSYRGHDVYTCTLPTSGPALIEGLNILDGYPLNTPSLAFPKRLHLEVEAMKWLSAGRTQFGDPDFLPLDHLDVVSKLLSKEFASQIRNNISLSKTYPWEHYNPSYDLPISHGTTHVSTVDSNNLAVSITSTVNLLFGSQLMDPVTGVVFNDQMDDFSIPGASNAFNLSPSPWNFIEPFKRPQSSSAPTILTDINGDFEMALGASGGSRIVTAVLDSIIKRIDMDYDIESMVASARPHHQLLPDILILESGFSKSVATRMKKYGHKVWRLKQHDTPLSQIQAVTRHHSEYYGMSDPRKYGQAAAY.

The Cytoplasmic segment spans residues 1–42 (MSPTDTTPLLYSWDDQSRHQDPDWHKLRNYHGAWYRRISRRR). The helical; Signal-anchor for type II membrane protein transmembrane segment at 43–63 (FSQFIFAFGLMTLFVLVYSIS) threads the bilayer. The Lumenal segment spans residues 64–611 (SNLHTPTQFT…PRKYGQAAAY (548 aa)). Asn-138 carries an N-linked (GlcNAc...) asparagine glycan. Residue Arg-147 participates in L-glutamate binding. N-linked (GlcNAc...) asparagine glycans are attached at residues Asn-153, Asn-297, and Asn-396. Thr-420 functions as the Nucleophile in the catalytic mechanism. Residues Thr-438, Asn-440, Gln-459, Asp-462, 490-491 (SS), and 512-513 (GG) contribute to the L-glutamate site.

It belongs to the gamma-glutamyltransferase family. Heterodimer composed of the light and heavy chains. The active site is located in the light chain. In terms of processing, cleaved by autocatalysis into a large and a small subunit.

It is found in the vacuole membrane. The catalysed reaction is an N-terminal (5-L-glutamyl)-[peptide] + an alpha-amino acid = 5-L-glutamyl amino acid + an N-terminal L-alpha-aminoacyl-[peptide]. The enzyme catalyses glutathione + H2O = L-cysteinylglycine + L-glutamate. It carries out the reaction an S-substituted glutathione + H2O = an S-substituted L-cysteinylglycine + L-glutamate. It functions in the pathway sulfur metabolism; glutathione metabolism. Its function is as follows. Catalyzes the transfer of the gamma-glutamyl moiety of glutathione (GSH) and other gamma-glutamyl compounds to amino acids and peptides. Major GSH-degrading enzyme, catalyzing the hydrolytic release of L-glutamate from GSH. Plays a role in the turnover of the vacuolar GSH, serving as an alternative nitrogen source during nitrogen starvation. This chain is Glutathione hydrolase proenzyme 2 (ggt2), found in Schizosaccharomyces pombe (strain 972 / ATCC 24843) (Fission yeast).